Here is a 327-residue protein sequence, read N- to C-terminus: Malate dehydrogenase (327 aa).

11-17 (GAAGQIS) lines the NAD(+) pocket. Arg92 and Arg98 together coordinate substrate. NAD(+)-binding positions include Asn105, Gln112, and 129 to 131 (VGN). Substrate is bound by residues Asn131 and Arg162. The active-site Proton acceptor is the His187.

This sequence belongs to the LDH/MDH superfamily. MDH type 2 family.

The enzyme catalyses (S)-malate + NAD(+) = oxaloacetate + NADH + H(+). Catalyzes the reversible oxidation of malate to oxaloacetate. This chain is Malate dehydrogenase, found in Saccharophagus degradans (strain 2-40 / ATCC 43961 / DSM 17024).